The chain runs to 138 residues: Cysteine desulfuration protein SufE (138 aa).

The active-site Cysteine persulfide intermediate is cysteine 51.

This sequence belongs to the SufE family. As to quaternary structure, homodimer. Interacts with SufS.

Its subcellular location is the cytoplasm. It participates in cofactor biosynthesis; iron-sulfur cluster biosynthesis. Its function is as follows. Participates in cysteine desulfuration mediated by SufS. Cysteine desulfuration mobilizes sulfur from L-cysteine to yield L-alanine and constitutes an essential step in sulfur metabolism for biosynthesis of a variety of sulfur-containing biomolecules. Functions as a sulfur acceptor for SufS, by mediating the direct transfer of the sulfur atom from the S-sulfanylcysteine of SufS, an intermediate product of cysteine desulfuration process. The sequence is that of Cysteine desulfuration protein SufE from Cronobacter sakazakii (strain ATCC BAA-894) (Enterobacter sakazakii).